Here is a 446-residue protein sequence, read N- to C-terminus: N-succinylarginine dihydrolase (446 aa).

Substrate is bound by residues 19 to 28, Asn-110, and 137 to 138; these read AGLSFGNVAS and HR. Glu-174 is an active-site residue. Arg-213 provides a ligand contact to substrate. Residue His-249 is part of the active site. Substrate is bound by residues Asp-251 and Asn-364. Cys-370 (nucleophile) is an active-site residue.

Belongs to the succinylarginine dihydrolase family. In terms of assembly, homodimer.

The enzyme catalyses N(2)-succinyl-L-arginine + 2 H2O + 2 H(+) = N(2)-succinyl-L-ornithine + 2 NH4(+) + CO2. It functions in the pathway amino-acid degradation; L-arginine degradation via AST pathway; L-glutamate and succinate from L-arginine: step 2/5. Catalyzes the hydrolysis of N(2)-succinylarginine into N(2)-succinylornithine, ammonia and CO(2). In Burkholderia cenocepacia (strain ATCC BAA-245 / DSM 16553 / LMG 16656 / NCTC 13227 / J2315 / CF5610) (Burkholderia cepacia (strain J2315)), this protein is N-succinylarginine dihydrolase.